We begin with the raw amino-acid sequence, 105 residues long: Heat shock protein HspQ (105 aa).

The segment at 77–105 (MRDEHPEQPSMDELARTIRKQLQAPRLRN) is disordered.

Belongs to the HspQ family.

It is found in the cytoplasm. Involved in the degradation of certain denaturated proteins, including DnaA, during heat shock stress. In Salmonella arizonae (strain ATCC BAA-731 / CDC346-86 / RSK2980), this protein is Heat shock protein HspQ.